A 206-amino-acid chain; its full sequence is Urease accessory protein UreG (206 aa).

Position 14–21 (14–21) interacts with GTP; it reads GPVGSGKT.

The protein belongs to the SIMIBI class G3E GTPase family. UreG subfamily. Homodimer. UreD, UreF and UreG form a complex that acts as a GTP-hydrolysis-dependent molecular chaperone, activating the urease apoprotein by helping to assemble the nickel containing metallocenter of UreC. The UreE protein probably delivers the nickel.

The protein localises to the cytoplasm. In terms of biological role, facilitates the functional incorporation of the urease nickel metallocenter. This process requires GTP hydrolysis, probably effectuated by UreG. The polypeptide is Urease accessory protein UreG (Aliivibrio fischeri (strain ATCC 700601 / ES114) (Vibrio fischeri)).